Reading from the N-terminus, the 635-residue chain is 1-deoxy-D-xylulose-5-phosphate synthase (635 aa).

Thiamine diphosphate-binding positions include His74 and 115 to 117 (AHS). Asp146 provides a ligand contact to Mg(2+). Thiamine diphosphate-binding positions include 147-148 (GA), Asn176, Tyr283, and Glu365. Mg(2+) is bound at residue Asn176.

It belongs to the transketolase family. DXPS subfamily. Homodimer. It depends on Mg(2+) as a cofactor. Requires thiamine diphosphate as cofactor.

The catalysed reaction is D-glyceraldehyde 3-phosphate + pyruvate + H(+) = 1-deoxy-D-xylulose 5-phosphate + CO2. It participates in metabolic intermediate biosynthesis; 1-deoxy-D-xylulose 5-phosphate biosynthesis; 1-deoxy-D-xylulose 5-phosphate from D-glyceraldehyde 3-phosphate and pyruvate: step 1/1. In terms of biological role, catalyzes the acyloin condensation reaction between C atoms 2 and 3 of pyruvate and glyceraldehyde 3-phosphate to yield 1-deoxy-D-xylulose-5-phosphate (DXP). The chain is 1-deoxy-D-xylulose-5-phosphate synthase from Polaromonas sp. (strain JS666 / ATCC BAA-500).